A 1338-amino-acid chain; its full sequence is Nonribosomal peptide synthetase astA (1338 aa).

Positions 22–52 (IAVVSGDIPSPHPKNEPSQTSTLHIPRDSDL) are disordered. The adenylation stretch occupies residues 271 to 681 (FQARCRQNPS…GRKGAEVKLR (411 aa)). Residues 820 to 893 (TPVEIIIHDA…SLAEKCSAGG (74 aa)) form the Carrier domain. Ser854 carries the O-(pantetheine 4'-phosphoryl)serine modification. Residues 949-1336 (TFIFRLSGPV…IIRFLDSPDS (388 aa)) form a condensation region.

It belongs to the NRP synthetase family.

The enzyme catalyses 7beta,14,16-trihydroxyconfertifolin + benzoate + H(+) = dideacetyl astellolide A + H2O. It catalyses the reaction 7beta,14,16-trihydroxyconfertifolin + 4-hydroxybenzoate + H(+) = dideacetyl astellolide B + H2O. Its pathway is secondary metabolite biosynthesis; terpenoid biosynthesis. Functionally, nonribosomal peptide synthetase; part of the gene cluster that mediates the biosynthesis of astellolides, drimane-type sesquiterpene esters that show antimicrobial, anti-inflammatory, and anti-tumor activities. The first step in astellolide biosynthesis is performed by the sesquiterpene cyclase astC that catalyzes the formation of drimanyl pyrophosphate from farnesyl pyrophosphate. Drimanyl pyrophosphate is then dephosphorylated by the sesquiterpene phosphatase astI to produce drimanyl monophosphate which is further dephosphorylated to drim-8-ene-11-ol by atsK. Drim-8-ene-11-ol is converted to confertifolin, probably by the cytochrome P450 monooxygenase astD and/or the dehydrogenase astE. The cytochrome P450 monooxygenases astB, astF and astJ then hydroxylate confertifolin at C6, C14, or C15 to form trihydroxy confertifolin. The nonribosomal peptide synthetase astA catalyzes ester bond formation between trihydroxy contifolin and benzoic acid (BA) or 4-hydroxy benzoic acid (4HBA), leading to the formation of dideacetyl astellolides A and B, respectively. Finally, the O-acetyltransferase astG converts dideacetyl astellolides A and B into deacetyl astellolides A and B. The sequence is that of Nonribosomal peptide synthetase astA from Aspergillus oryzae (strain ATCC 42149 / RIB 40) (Yellow koji mold).